Consider the following 290-residue polypeptide: uncharacterized protein (290 aa).

The signal sequence occupies residues 1–25 (MNKKSILSKTSLGSLFFLFGTALSA). Cysteine 26 carries the N-palmitoyl cysteine lipid modification. Cysteine 26 is lipidated: S-diacylglycerol cysteine. The disordered stretch occupies residues 183–203 (GTDSKGSGSNNQNGGVTEKDF). Over residues 186–197 (SKGSGSNNQNGG) the composition is skewed to low complexity.

The protein belongs to the MG439/MG440 family.

It localises to the cell membrane. This is an uncharacterized protein from Mycoplasma pneumoniae (strain ATCC 29342 / M129 / Subtype 1) (Mycoplasmoides pneumoniae).